Here is a 276-residue protein sequence, read N- to C-terminus: MGYATAHRRVRHLSADQVITRPETLAVEEPLEIRVNGTPVTVTMRTPGSDFELVQGFLLAEGVVAHREDVLTVSYCGRRVEGNATGASTYNVLDVALAPGVKPPDVDVTRTFYTTSSCGVCGKASLQAVSQVSRFAPGGDPATVAADTLKAMPDQLRRAQKVFARTGGLHAAALFGVDGAMLAVREDIGRHNAVDKVIGWAFERDRIPLGASVLLVSGRASFELTQKALMAGIPVLAAVSAPSSLAVSLADASGITLVAFLRGDSMNVYTRADRIT.

C118 acts as the Cysteine persulfide intermediate in catalysis.

It belongs to the FdhD family.

It localises to the cytoplasm. In terms of biological role, required for formate dehydrogenase (FDH) activity. Acts as a sulfur carrier protein that transfers sulfur from IscS to the molybdenum cofactor prior to its insertion into FDH. This is Sulfur carrier protein FdhD from Mycobacterium bovis (strain ATCC BAA-935 / AF2122/97).